The chain runs to 122 residues: Ubiquitin-related modifier 1 (122 aa).

Positions 33 to 48 (PSTVPADNNTSVTTKD) are enriched in polar residues. The interval 33–52 (PSTVPADNNTSVTTKDAASP) is disordered. Glycine 122 carries the post-translational modification 1-thioglycine. Glycine 122 is covalently cross-linked (Glycyl lysine isopeptide (Gly-Lys) (interchain with K-? in acceptor proteins)).

This sequence belongs to the URM1 family. Post-translationally, C-terminal thiocarboxylation occurs in 2 steps, it is first acyl-adenylated (-COAMP) via the hesA/moeB/thiF part of UBA4, then thiocarboxylated (-COSH) via the rhodanese domain of UBA4.

The protein localises to the cytoplasm. The protein operates within tRNA modification; 5-methoxycarbonylmethyl-2-thiouridine-tRNA biosynthesis. Functionally, acts as a sulfur carrier required for 2-thiolation of mcm(5)S(2)U at tRNA wobble positions of cytosolic tRNA(Lys), tRNA(Glu) and tRNA(Gln). Serves as sulfur donor in tRNA 2-thiolation reaction by being thiocarboxylated (-COSH) at its C-terminus by the MOCS3 homolog UBA4. The sulfur is then transferred to tRNA to form 2-thiolation of mcm(5)S(2)U. Prior mcm(5) tRNA modification by the elongator complex is required for 2-thiolation. Also acts as a ubiquitin-like protein (UBL) that is covalently conjugated via an isopeptide bond to lysine residues of target proteins such as AHP1. The thiocarboxylated form serves as substrate for conjugation and oxidative stress specifically induces the formation of UBL-protein conjugates. This is Ubiquitin-related modifier 1 from Laccaria bicolor (strain S238N-H82 / ATCC MYA-4686) (Bicoloured deceiver).